The following is a 392-amino-acid chain: tRNA (guanine-N(7)-)-methyltransferase (392 aa).

The S-adenosyl-L-methionine site is built by Glu123, Glu148, and Asp175. The substrate site is built by Lys201 and Asp231.

It belongs to the class I-like SAM-binding methyltransferase superfamily. TrmB family.

It catalyses the reaction guanosine(46) in tRNA + S-adenosyl-L-methionine = N(7)-methylguanosine(46) in tRNA + S-adenosyl-L-homocysteine. Its pathway is tRNA modification; N(7)-methylguanine-tRNA biosynthesis. Functionally, catalyzes the formation of N(7)-methylguanine at position 46 (m7G46) in tRNA. The chain is tRNA (guanine-N(7)-)-methyltransferase from Campylobacter jejuni (strain RM1221).